The chain runs to 128 residues: Phosphoribosyl-AMP cyclohydrolase (128 aa).

D77 contacts Mg(2+). C78 contributes to the Zn(2+) binding site. Residues D79 and D81 each coordinate Mg(2+). 2 residues coordinate Zn(2+): C94 and C101.

The protein belongs to the PRA-CH family. Homodimer. It depends on Mg(2+) as a cofactor. Requires Zn(2+) as cofactor.

Its subcellular location is the cytoplasm. It carries out the reaction 1-(5-phospho-beta-D-ribosyl)-5'-AMP + H2O = 1-(5-phospho-beta-D-ribosyl)-5-[(5-phospho-beta-D-ribosylamino)methylideneamino]imidazole-4-carboxamide. Its pathway is amino-acid biosynthesis; L-histidine biosynthesis; L-histidine from 5-phospho-alpha-D-ribose 1-diphosphate: step 3/9. Catalyzes the hydrolysis of the adenine ring of phosphoribosyl-AMP. This chain is Phosphoribosyl-AMP cyclohydrolase, found in Granulibacter bethesdensis (strain ATCC BAA-1260 / CGDNIH1).